A 206-amino-acid chain; its full sequence is Guanylate kinase (206 aa).

The Guanylate kinase-like domain occupies 5–183 (FNLLILSGPS…SKEIILSIAK (179 aa)). 12 to 19 (GPSGAGKS) is a binding site for ATP.

It belongs to the guanylate kinase family.

Its subcellular location is the cytoplasm. It catalyses the reaction GMP + ATP = GDP + ADP. Functionally, essential for recycling GMP and indirectly, cGMP. This is Guanylate kinase from Helicobacter pylori (strain HPAG1).